An 871-amino-acid polypeptide reads, in one-letter code: Pentatricopeptide repeat-containing protein At3g06920 (871 aa).

21 PPR repeats span residues 97-131 (CPES…GFGP), 132-166 (SVNT…KFRP), 167-201 (AFSA…GYEP), 202-236 (TVHL…SLDA), 237-271 (DIVL…GLKP), 272-306 (DEVT…RRVP), 307-341 (CTYA…GSIP), 342-372 (SVIA…MKKD), 376-410 (NLST…GLFP), 411-445 (NVRT…VCTP), 446-480 (DEIT…DCRT), 481-515 (NSIV…NCSP), 516-550 (DLQL…RFVP), 551-585 (DARS…GCVL), 586-620 (DTRA…GFEP), 621-655 (TVVT…RIEL), 656-690 (NVVI…GLTP), 691-725 (NLYT…KCTP), 726-760 (NQVT…GMKP), 761-795 (STIS…GGVP), and 796-830 (DSAC…GLPI).

It belongs to the PPR family. P subfamily.

This Arabidopsis thaliana (Mouse-ear cress) protein is Pentatricopeptide repeat-containing protein At3g06920.